The sequence spans 417 residues: Dihydroorotase (417 aa).

Residues His60 and His62 each coordinate Zn(2+). Substrate is bound by residues 62–64 (HLR) and Asn94. Zn(2+) is bound by residues Lys138, His167, His207, and Asp275. Lys138 is subject to N6-carboxylysine. Asp275 is a catalytic residue. Residues His279 and 289–290 (AG) each bind substrate.

The protein belongs to the metallo-dependent hydrolases superfamily. DHOase family. Class I DHOase subfamily. Zn(2+) is required as a cofactor.

The enzyme catalyses (S)-dihydroorotate + H2O = N-carbamoyl-L-aspartate + H(+). It participates in pyrimidine metabolism; UMP biosynthesis via de novo pathway; (S)-dihydroorotate from bicarbonate: step 3/3. Its function is as follows. Catalyzes the reversible cyclization of carbamoyl aspartate to dihydroorotate. This Pyrococcus horikoshii (strain ATCC 700860 / DSM 12428 / JCM 9974 / NBRC 100139 / OT-3) protein is Dihydroorotase.